The chain runs to 179 residues: ATP synthase subunit delta (179 aa).

It belongs to the ATPase delta chain family. As to quaternary structure, F-type ATPases have 2 components, F(1) - the catalytic core - and F(0) - the membrane proton channel. F(1) has five subunits: alpha(3), beta(3), gamma(1), delta(1), epsilon(1). F(0) has three main subunits: a(1), b(2) and c(10-14). The alpha and beta chains form an alternating ring which encloses part of the gamma chain. F(1) is attached to F(0) by a central stalk formed by the gamma and epsilon chains, while a peripheral stalk is formed by the delta and b chains.

It is found in the cell inner membrane. Functionally, f(1)F(0) ATP synthase produces ATP from ADP in the presence of a proton or sodium gradient. F-type ATPases consist of two structural domains, F(1) containing the extramembraneous catalytic core and F(0) containing the membrane proton channel, linked together by a central stalk and a peripheral stalk. During catalysis, ATP synthesis in the catalytic domain of F(1) is coupled via a rotary mechanism of the central stalk subunits to proton translocation. This protein is part of the stalk that links CF(0) to CF(1). It either transmits conformational changes from CF(0) to CF(1) or is implicated in proton conduction. The protein is ATP synthase subunit delta of Anaeromyxobacter sp. (strain Fw109-5).